A 324-amino-acid chain; its full sequence is MATLLLQLLGLGVALAAAALILVSIVAFITATKMPPCYQHEEEKFFLNAKGQKEALPSIWDSPTKQLSVVVPSYNEEKRLPVMMDEALNYLEKRQKHDCTFTYEVIVVDDGSEDQTSKVALKYCQKYGSDKVRVITLVRNRGKGGAVRMGVFSSRGEKILMADADGATKFPDVEKLEKGLSDLQPWPEQMAIACGSRAHLEKESIAQRSYFRTFLMYGFHFLVWFLCVKGIRDTQCGFKLLTREAAARTFSSLHIERWAFDVELLYIAQCLQIPIAEVAVNWTEIEGSKLVPFWSWLQMGKDLLFIRLRYLTGAWRLKQTRKAS.

Over 1–7 (MATLLLQ) the chain is Lumenal. A helical transmembrane segment spans residues 8-28 (LLGLGVALAAAALILVSIVAF). Residues 29 to 324 (ITATKMPPCY…WRLKQTRKAS (296 aa)) are Cytoplasmic-facing.

The protein belongs to the glycosyltransferase 2 family.

It localises to the endoplasmic reticulum membrane. The catalysed reaction is a di-trans,poly-cis-dolichyl phosphate + UDP-alpha-D-glucose = a di-trans,poly-cis-dolichyl beta-D-glucosyl phosphate + UDP. It participates in protein modification; protein glycosylation. Its function is as follows. Dolichyl-phosphate beta-glucosyltransferase that operates in the biosynthetic pathway of dolichol-linked oligosaccharides, the glycan precursors employed in protein asparagine (N)-glycosylation. The assembly of dolichol-linked oligosaccharides begins on the cytosolic side of the endoplasmic reticulum membrane and finishes in its lumen. The sequential addition of sugars to dolichol pyrophosphate produces dolichol-linked oligosaccharides containing fourteen sugars, including two GlcNAcs, nine mannoses and three glucoses. Once assembled, the oligosaccharide is transferred from the lipid to nascent proteins by oligosaccharyltransferases. Dolichyl-phosphate beta-glucosyltransferase produces dolichyl beta-D-glucosyl phosphate/Dol-P-Glc, the glucose donor substrate used sequentially by ALG6, ALG8 and ALG10 to add glucose residues on top of the Man(9)GlcNAc(2)-PP-Dol structure. These are the three last steps in the biosynthetic pathway of dolichol-linked oligosaccharides to produce Glc(3)Man(9)GlcNAc(2)-PP-Dol. The enzyme is most probably active on the cytoplasmic side of the endoplasmic reticulum while its product Dol-P-Glc is the substrate for ALG6, ALG8 and ALG11 in the lumen of the endoplasmic reticulum. The protein is Dolichyl-phosphate beta-glucosyltransferase of Mus musculus (Mouse).